The following is a 101-amino-acid chain: Small ribosomal subunit protein uS14 (101 aa).

Basic and acidic residues predominate over residues 1-10; the sequence is MAKKSSIEKN. Positions 1-23 are disordered; it reads MAKKSSIEKNNRRRKMTKNAAPK. Residues 11-23 are compositionally biased toward basic residues; it reads NRRRKMTKNAAPK.

This sequence belongs to the universal ribosomal protein uS14 family. As to quaternary structure, part of the 30S ribosomal subunit. Contacts proteins S3 and S10.

Functionally, binds 16S rRNA, required for the assembly of 30S particles and may also be responsible for determining the conformation of the 16S rRNA at the A site. The polypeptide is Small ribosomal subunit protein uS14 (Rhodopseudomonas palustris (strain BisB5)).